A 310-amino-acid chain; its full sequence is Cytochrome f (310 aa).

Positions 1–26 are cleaved as a signal peptide; sequence MNIKLTLLVLISIINLMIIQPIQTLA. 4 residues coordinate heme: Phe-27, Cys-47, Cys-50, and His-51. Residues 276–296 traverse the membrane as a helical segment; the sequence is IKGMIVFFFTVTIAQIFFVLK.

It belongs to the cytochrome f family. As to quaternary structure, the 4 large subunits of the cytochrome b6-f complex are cytochrome b6, subunit IV (17 kDa polypeptide, petD), cytochrome f and the Rieske protein, while the 4 small subunits are PetG, PetL, PetM and PetN. The complex functions as a dimer. It depends on heme as a cofactor.

It localises to the plastid. The protein localises to the chloroplast thylakoid membrane. Its function is as follows. Component of the cytochrome b6-f complex, which mediates electron transfer between photosystem II (PSII) and photosystem I (PSI), cyclic electron flow around PSI, and state transitions. In Gracilaria tenuistipitata var. liui (Red alga), this protein is Cytochrome f.